The chain runs to 148 residues: NADPH-dependent 7-cyano-7-deazaguanine reductase (148 aa).

The Thioimide intermediate role is filled by Cys-50. Residue Asp-57 is the Proton donor of the active site. Residues 72-74 (VES) and 91-92 (HE) each bind substrate.

It belongs to the GTP cyclohydrolase I family. QueF type 1 subfamily.

It is found in the cytoplasm. It carries out the reaction 7-aminomethyl-7-carbaguanine + 2 NADP(+) = 7-cyano-7-deazaguanine + 2 NADPH + 3 H(+). The protein operates within tRNA modification; tRNA-queuosine biosynthesis. Its function is as follows. Catalyzes the NADPH-dependent reduction of 7-cyano-7-deazaguanine (preQ0) to 7-aminomethyl-7-deazaguanine (preQ1). The protein is NADPH-dependent 7-cyano-7-deazaguanine reductase of Helicobacter pylori (strain J99 / ATCC 700824) (Campylobacter pylori J99).